Consider the following 889-residue polypeptide: Oxysterol-binding protein-related protein 8 (889 aa).

Methionine 1 carries the N-acetylmethionine modification. The tract at residues methionine 1–arginine 129 is disordered. Serine 14 carries the phosphoserine modification. Composition is skewed to polar residues over residues valine 28 to arginine 46 and proline 62 to serine 71. Residues serine 65 and serine 68 each carry the phosphoserine modification. 3 stretches are compositionally biased toward basic and acidic residues: residues glycine 73 to serine 88, serine 95 to serine 109, and threonine 116 to arginine 129. One can recognise a PH domain in the interval valine 148–lysine 265. A phosphoserine mark is found at serine 314, serine 328, and serine 342. The segment covering lysine 322–aspartate 336 has biased composition (basic and acidic residues). Residues lysine 322–valine 399 form a disordered region. Residues valine 346–aspartate 363 are compositionally biased toward basic and acidic residues. Residues leucine 420–leucine 425, lysine 482–asparagine 485, and histidine 514–histidine 515 contribute to the a 1,2-diacyl-sn-glycero-3-phospho-(1D-myo-inositol 4-phosphate) site. A 1,2-diacyl-sn-glycero-3-phospho-L-serine-binding positions include leucine 420–leucine 425 and asparagine 485. Position 540 (serine 540) interacts with a 1,2-diacyl-sn-glycero-3-phospho-L-serine. 3 residues coordinate a 1,2-diacyl-sn-glycero-3-phospho-(1D-myo-inositol 4-phosphate): lysine 706, glutamate 710, and arginine 714. The tract at residues lysine 771–lysine 823 is disordered. Basic residues predominate over residues lysine 781–alanine 794. The segment covering glutamine 805–proline 817 has biased composition (polar residues). 4 positions are modified to phosphoserine: serine 807, serine 808, serine 810, and serine 814. Residues tyrosine 871–phenylalanine 888 traverse the membrane as a helical segment.

Belongs to the OSBP family. As to quaternary structure, interacts with SPAG5. Interacts with NUP62. As to expression, widely expressed. Expressed at higher level in macrophages.

It is found in the endoplasmic reticulum membrane. Its subcellular location is the nucleus membrane. Its function is as follows. Lipid transporter involved in lipid countertransport between the endoplasmic reticulum and the plasma membrane: specifically exchanges phosphatidylserine with phosphatidylinositol 4-phosphate (PI4P), delivering phosphatidylserine to the plasma membrane in exchange for PI4P, which is degraded by the SAC1/SACM1L phosphatase in the endoplasmic reticulum. Binds phosphatidylserine and PI4P in a mutually exclusive manner. Binds oxysterol, 25-hydroxycholesterol and cholesterol. This chain is Oxysterol-binding protein-related protein 8 (OSBPL8), found in Homo sapiens (Human).